A 565-amino-acid polypeptide reads, in one-letter code: Salicyl-AMP ligase / salicyl-S-ArCP synthetase (565 aa).

Residues G214, G330, V352, D436, R451, and K542 each coordinate ATP.

This sequence belongs to the ATP-dependent AMP-binding enzyme family.

It catalyses the reaction salicylate + ATP + H(+) = 2-hydroxybenzoyl-5'-AMP + diphosphate. The catalysed reaction is 2-hydroxybenzoyl-5'-AMP + holo-[ACP] = salicyl-[ACP] + AMP + H(+). The protein operates within siderophore biosynthesis; mycobactin biosynthesis. Inhibited by salicyl-AMS, an acyl-AMP analog. Also inhibited by 5'-O-[(N-acyl)sulfamoyl]adenosines. Functionally, involved in the initial steps of the mycobactin biosynthetic pathway. Catalyzes the salicylation of the aryl carrier protein (ArCP) domain of MbtB through a two-step reaction. The first step is the ATP-dependent adenylation of salicylate to generate a salicyl-AMP intermediate. The second step is the transfer of this activated salicylate to MbtB to form a salicyl-ArCP domain thioester. The chain is Salicyl-AMP ligase / salicyl-S-ArCP synthetase from Mycobacterium tuberculosis (strain ATCC 25618 / H37Rv).